Consider the following 620-residue polypeptide: Sorbicillinoid biosynthetic cluster transcription factor 1 (620 aa).

A DNA-binding region (zn(2)-C6 fungal-type) is located at residues Cys-10–Cys-37. The tract at residues His-285 to Asn-308 is disordered. Residues Pro-291–Asn-308 show a composition bias toward polar residues.

It is found in the nucleus. In terms of biological role, transcription factor that acts as the main regulator of the gene cluster that mediates the biosynthesis of sorbicillinoids, a diverse group of yellow secondary metabolites that restrict growth of competing pathogenic fungi but not of bacteria. The protein is Sorbicillinoid biosynthetic cluster transcription factor 1 of Penicillium rubens (strain ATCC 28089 / DSM 1075 / NRRL 1951 / Wisconsin 54-1255) (Penicillium chrysogenum).